The sequence spans 393 residues: Pinosylvin synthase (393 aa).

57-60 (KFKR) contacts substrate. The active site involves Cys167. Substrate-binding positions include Leu270 and 308–310 (GGR).

The protein belongs to the thiolase-like superfamily. Chalcone/stilbene synthases family. In terms of assembly, homodimer.

It is found in the cytoplasm. The enzyme catalyses (E)-cinnamoyl-CoA + 3 malonyl-CoA + 3 H(+) = (E)-pinosylvin + 4 CO2 + 4 CoA. The catalysed reaction is 3-phenylpropanoyl-CoA + 3 malonyl-CoA + 3 H(+) = dihydropinosylvin + 4 CO2 + 4 CoA. The protein operates within phytoalexin biosynthesis; hydropinosylvin biosynthesis. In terms of biological role, catalyzes the production of pinosylvin from cinnamoyl-CoA and malonyl-CoA, and dihydropinosylvin from dihydrocinnamoyl-CoA. The polypeptide is Pinosylvin synthase (Pinus sylvestris (Scotch pine)).